The following is a 184-amino-acid chain: Endoribonuclease YbeY (184 aa).

The Zn(2+) site is built by H118, H122, and H128. The disordered stretch occupies residues Y156 to P184. Residues H157–P184 show a composition bias toward basic and acidic residues.

This sequence belongs to the endoribonuclease YbeY family. The cofactor is Zn(2+).

Its subcellular location is the cytoplasm. In terms of biological role, single strand-specific metallo-endoribonuclease involved in late-stage 70S ribosome quality control and in maturation of the 3' terminus of the 16S rRNA. This Mycolicibacterium vanbaalenii (strain DSM 7251 / JCM 13017 / BCRC 16820 / KCTC 9966 / NRRL B-24157 / PYR-1) (Mycobacterium vanbaalenii) protein is Endoribonuclease YbeY.